A 333-amino-acid chain; its full sequence is Casein kinase II subunit beta-1 (333 aa).

Acidic residues predominate over residues 58-78 (VEPEDDDDEEEEDEEDEEDMS). Disordered stretches follow at residues 58–92 (VEPEDDDDEEEEDEEDEEDMSGGDGINKPHGERRH) and 282–333 (ARRY…ESEL). The segment covering 305–316 (ASRRRGPPRRQK) has biased composition (basic residues).

The protein belongs to the casein kinase 2 subunit beta family. Tetramer composed of two alpha chains, one beta chain and one beta' chain. Phosphorylated by alpha subunit.

Regulatory subunit of casein kinase II/CK2. As part of the kinase complex regulates the basal catalytic activity of the alpha subunit a constitutively active serine/threonine-protein kinase that phosphorylates a large number of substrates containing acidic residues C-terminal to the phosphorylated serine or threonine. The chain is Casein kinase II subunit beta-1 (ckb-1) from Neurospora crassa (strain ATCC 24698 / 74-OR23-1A / CBS 708.71 / DSM 1257 / FGSC 987).